The primary structure comprises 429 residues: Enolase (429 aa).

Gln163 lines the (2R)-2-phosphoglycerate pocket. Catalysis depends on Glu205, which acts as the Proton donor. 3 residues coordinate Mg(2+): Asp242, Glu287, and Asp314. Residues Lys339, Arg368, Ser369, and Lys390 each coordinate (2R)-2-phosphoglycerate. Lys339 functions as the Proton acceptor in the catalytic mechanism.

This sequence belongs to the enolase family. In terms of assembly, homooctamer. Mg(2+) serves as cofactor.

The protein resides in the cytoplasm. It is found in the secreted. It localises to the cell surface. It carries out the reaction (2R)-2-phosphoglycerate = phosphoenolpyruvate + H2O. Its pathway is carbohydrate degradation; glycolysis; pyruvate from D-glyceraldehyde 3-phosphate: step 4/5. Functionally, catalyzes the reversible conversion of 2-phosphoglycerate (2-PG) into phosphoenolpyruvate (PEP). It is essential for the degradation of carbohydrates via glycolysis. The protein is Enolase of Zymomonas mobilis subsp. mobilis (strain ATCC 31821 / ZM4 / CP4).